The primary structure comprises 67 residues: DNA-directed RNA polymerases I, II, and III subunit RPABC5 (67 aa).

Residues Cys-7, Cys-10, Cys-44, and Cys-45 each coordinate Zn(2+).

The protein belongs to the archaeal Rpo10/eukaryotic RPB10 RNA polymerase subunit family. In terms of assembly, component of the RNA polymerase I (Pol I), RNA polymerase II (Pol II) and RNA polymerase III (Pol III) complexes consisting of at least 13, 12 and 17 subunits, respectively.

The protein localises to the nucleus. In terms of biological role, DNA-dependent RNA polymerase catalyzes the transcription of DNA into RNA using the four ribonucleoside triphosphates as substrates. Common component of RNA polymerases I, II and III which synthesize ribosomal RNA precursors, mRNA precursors and many functional non-coding RNAs, and a small RNAs, such as 5S rRNA and tRNAs, respectively. Pol II is the central component of the basal RNA polymerase II transcription machinery. Pols are composed of mobile elements that move relative to each other. In Pol II, Polr2L is part of the core element with the central large cleft. The chain is DNA-directed RNA polymerases I, II, and III subunit RPABC5 from Drosophila melanogaster (Fruit fly).